Here is a 178-residue protein sequence, read N- to C-terminus: Large ribosomal subunit protein uL6 (178 aa).

This sequence belongs to the universal ribosomal protein uL6 family. Part of the 50S ribosomal subunit.

This protein binds to the 23S rRNA, and is important in its secondary structure. It is located near the subunit interface in the base of the L7/L12 stalk, and near the tRNA binding site of the peptidyltransferase center. The chain is Large ribosomal subunit protein uL6 from Buchnera aphidicola subsp. Acyrthosiphon pisum (strain APS) (Acyrthosiphon pisum symbiotic bacterium).